A 183-amino-acid polypeptide reads, in one-letter code: NRR repressor homolog 1 (183 aa).

2 disordered regions span residues 1–40 (MEGVDVKAPRPGCGGDDGGAAAASLSARREEEEEGAVVGG) and 66–183 (NGEE…PTDQ). Residues 31–40 (EEEEGAVVGG) show a composition bias toward acidic residues. Gly residues predominate over residues 70 to 79 (GAAGGDGDGA). A compositionally biased stretch (acidic residues) spans 101-115 (FEFEEAAAGAGDDDA). Basic and acidic residues predominate over residues 135 to 145 (AVEKRRTEKEA). Over residues 150–161 (AEDDDDEQEGGE) the composition is skewed to acidic residues. Residues 163-183 (VEGKEEHRPGRRVEAHGPTDQ) show a composition bias toward basic and acidic residues.

Belongs to the NPR1-interactor family. As to quaternary structure, interacts with NPR1/NH1. Interacts with NPR3/NH3.

Its subcellular location is the nucleus. Its function is as follows. Binds to and represses NPR1/NH1-mediated transcriptional activation of LG2 in vitro. The sequence is that of NRR repressor homolog 1 from Oryza sativa subsp. japonica (Rice).